The primary structure comprises 258 residues: Imidazole glycerol phosphate synthase subunit HisF (258 aa).

Catalysis depends on residues Asp-11 and Asp-130.

It belongs to the HisA/HisF family. As to quaternary structure, heterodimer of HisH and HisF.

Its subcellular location is the cytoplasm. The catalysed reaction is 5-[(5-phospho-1-deoxy-D-ribulos-1-ylimino)methylamino]-1-(5-phospho-beta-D-ribosyl)imidazole-4-carboxamide + L-glutamine = D-erythro-1-(imidazol-4-yl)glycerol 3-phosphate + 5-amino-1-(5-phospho-beta-D-ribosyl)imidazole-4-carboxamide + L-glutamate + H(+). Its pathway is amino-acid biosynthesis; L-histidine biosynthesis; L-histidine from 5-phospho-alpha-D-ribose 1-diphosphate: step 5/9. Its function is as follows. IGPS catalyzes the conversion of PRFAR and glutamine to IGP, AICAR and glutamate. The HisF subunit catalyzes the cyclization activity that produces IGP and AICAR from PRFAR using the ammonia provided by the HisH subunit. This Escherichia fergusonii (strain ATCC 35469 / DSM 13698 / CCUG 18766 / IAM 14443 / JCM 21226 / LMG 7866 / NBRC 102419 / NCTC 12128 / CDC 0568-73) protein is Imidazole glycerol phosphate synthase subunit HisF.